Consider the following 470-residue polypeptide: Protein C-ets-2 (470 aa).

The PNT domain maps to 85 to 170 (ATFSGFKKEQ…EHLEQMIKEN (86 aa)). Ser225 is subject to Phosphoserine. The interval 270–291 (ASGKPRDHDSAETGGDSFESSE) is disordered. 3 positions are modified to phosphoserine: Ser296, Ser299, and Ser302. The segment at residues 364–444 (IQLWQFLLEL…SGKRYVYRFV (81 aa)) is a DNA-binding region (ETS).

Belongs to the ETS family. Phosphorylation by CDK10 at Ser-225 may create a phosphodegron that targets ETS2 for proteasomal degradation.

It localises to the nucleus. Transcription factor activating transcription. Binds specifically the GGA DNA motif in gene promoters and stimulates transcription of those genes. The chain is Protein C-ets-2 (ETS2) from Bos taurus (Bovine).